We begin with the raw amino-acid sequence, 275 residues long: Glutamate 5-kinase (275 aa).

Lys-17 serves as a coordination point for ATP. Ser-57, Asp-144, and Asn-160 together coordinate substrate. ATP contacts are provided by residues 180 to 181 (SD) and 222 to 228 (TGGMLSK).

This sequence belongs to the glutamate 5-kinase family.

Its subcellular location is the cytoplasm. The catalysed reaction is L-glutamate + ATP = L-glutamyl 5-phosphate + ADP. It participates in amino-acid biosynthesis; L-proline biosynthesis; L-glutamate 5-semialdehyde from L-glutamate: step 1/2. Catalyzes the transfer of a phosphate group to glutamate to form L-glutamate 5-phosphate. The polypeptide is Glutamate 5-kinase (Streptococcus pyogenes serotype M12 (strain MGAS2096)).